The sequence spans 466 residues: Citrate synthase, mitochondrial (466 aa).

A mitochondrion-targeting transit peptide spans 1-27 (MALLTAAARLFGAKNASCLVLAARHAS). An SIFI-degron motif is present at residues 2–21 (ALLTAAARLFGAKNASCLVL). An N6-succinyllysine modification is found at lysine 57. Lysine 76 bears the N6-acetyllysine; alternate mark. The residue at position 76 (lysine 76) is an N6-succinyllysine; alternate. 2 positions are modified to N6-succinyllysine: lysine 103 and lysine 193. Phosphoserine is present on serine 226. Residue histidine 301 is part of the active site. N6-acetyllysine; alternate is present on residues lysine 321 and lysine 327. 2 positions are modified to N6-succinyllysine; alternate: lysine 321 and lysine 327. Histidine 347 is an active-site residue. Residue arginine 356 coordinates oxaloacetate. Lysine 375 bears the N6-acetyllysine; alternate mark. Lysine 375 is subject to N6-succinyllysine; alternate. At lysine 382 the chain carries N6-acetyllysine. The residue at position 393 (lysine 393) is an N6-acetyllysine; alternate. N6-succinyllysine; alternate is present on lysine 393. Lysine 395 is modified (N6,N6,N6-trimethyllysine). The active site involves aspartate 402. Positions 428 and 448 each coordinate oxaloacetate. Lysine 450 carries the post-translational modification N6-succinyllysine. The residue at position 459 (lysine 459) is an N6-acetyllysine; alternate. Lysine 459 bears the N6-succinyllysine; alternate mark.

It belongs to the citrate synthase family. In terms of assembly, homodimer. Methylated. Trimethylation at Lys-395 by CSKMT decreases citrate synthase activity. In terms of processing, in response to mitochondrial stress, the precursor protein is ubiquitinated by the SIFI complex in the cytoplasm before mitochondrial import, leading to its degradation. Within the SIFI complex, UBR4 initiates ubiquitin chain that are further elongated or branched by KCMF1.

The protein resides in the mitochondrion matrix. It catalyses the reaction oxaloacetate + acetyl-CoA + H2O = citrate + CoA + H(+). Its pathway is carbohydrate metabolism; tricarboxylic acid cycle; isocitrate from oxaloacetate: step 1/2. Its function is as follows. Key enzyme of the Krebs tricarboxylic acid cycle which catalyzes the synthesis of citrate from acetyl coenzyme A and oxaloacetate. The polypeptide is Citrate synthase, mitochondrial (CS) (Bos taurus (Bovine)).